The primary structure comprises 184 residues: uncharacterized protein (184 aa).

The 4Fe-4S domain maps to 72-135 (RKSQAILLIG…GIALGSAVKV (64 aa)). Residues C92, C95, C100, and C118 each contribute to the [4Fe-4S] cluster site.

Requires [4Fe-4S] cluster as cofactor.

This is an uncharacterized protein from Archaeoglobus fulgidus (strain ATCC 49558 / DSM 4304 / JCM 9628 / NBRC 100126 / VC-16).